Reading from the N-terminus, the 415-residue chain is Transcription termination factor Rho (415 aa).

The region spanning 52 to 119 is the Rho RNA-BD domain; it reads ADIASGVLDI…TDVVRVNGRT (68 aa). Residues 161 to 166, 173 to 178, and Arg-204 contribute to the ATP site; these read GKGQRG and KTGKTV.

This sequence belongs to the Rho family. Homohexamer. The homohexamer assembles into an open ring structure.

Functionally, facilitates transcription termination by a mechanism that involves Rho binding to the nascent RNA, activation of Rho's RNA-dependent ATPase activity, and release of the mRNA from the DNA template. The polypeptide is Transcription termination factor Rho (Streptomyces coelicolor (strain ATCC BAA-471 / A3(2) / M145)).